Reading from the N-terminus, the 39-residue chain is Photosystem II reaction center protein Psb30 (39 aa).

Residues 12–32 (IFQLTFVGLIVIAGPIVIAVL) form a helical membrane-spanning segment.

This sequence belongs to the Psb30/Ycf12 family. PSII is composed of 1 copy each of membrane proteins PsbA, PsbB, PsbC, PsbD, PsbE, PsbF, PsbH, PsbI, PsbJ, PsbK, PsbL, PsbM, PsbT, PsbX, PsbY, PsbZ, Psb30/Ycf12, peripheral proteins PsbO, CyanoQ (PsbQ), PsbU, PsbV and a large number of cofactors. It forms dimeric complexes.

The protein localises to the cellular thylakoid membrane. A core subunit of photosystem II (PSII), probably helps stabilize the reaction center. This is Photosystem II reaction center protein Psb30 from Crocosphaera subtropica (strain ATCC 51142 / BH68) (Cyanothece sp. (strain ATCC 51142)).